The sequence spans 151 residues: Deoxyuridine 5'-triphosphate nucleotidohydrolase (151 aa).

Substrate is bound by residues 70–72 (RSG), Asn-83, 87–89 (LID), and Met-97.

It belongs to the dUTPase family. It depends on Mg(2+) as a cofactor.

It catalyses the reaction dUTP + H2O = dUMP + diphosphate + H(+). The protein operates within pyrimidine metabolism; dUMP biosynthesis; dUMP from dCTP (dUTP route): step 2/2. In terms of biological role, this enzyme is involved in nucleotide metabolism: it produces dUMP, the immediate precursor of thymidine nucleotides and it decreases the intracellular concentration of dUTP so that uracil cannot be incorporated into DNA. The sequence is that of Deoxyuridine 5'-triphosphate nucleotidohydrolase from Pseudomonas paraeruginosa (strain DSM 24068 / PA7) (Pseudomonas aeruginosa (strain PA7)).